Here is a 1558-residue protein sequence, read N- to C-terminus: Eukaryotic translation initiation factor 2-alpha kinase 1 (1558 aa).

The Protein kinase domain occupies 429 to 789 (FFEEKILGCG…AYNLLHESVL (361 aa)). Residues 435 to 443 (LGCGGFGYV) and lysine 458 each bind ATP. The Proton acceptor role is filled by aspartate 660. The segment at 1014–1033 (GTSTNNNNNNNNNNMGNNNI) is disordered.

The protein belongs to the protein kinase superfamily. Ser/Thr protein kinase family. GCN2 subfamily. Auto-phosphorylated.

The enzyme catalyses L-seryl-[protein] + ATP = O-phospho-L-seryl-[protein] + ADP + H(+). The catalysed reaction is L-threonyl-[protein] + ATP = O-phospho-L-threonyl-[protein] + ADP + H(+). Its function is as follows. In blood stage parasites, phosphorylates translation factor eIF2alpha in response to amino acid starvation. During the asexual blood stage, involved in the response to the host hormone melatonin which is used by the parasite to modulate its cell cycle. The sequence is that of Eukaryotic translation initiation factor 2-alpha kinase 1 from Plasmodium falciparum (isolate 3D7).